The following is a 474-amino-acid chain: MSRLVVVSNRIAPPDEHAASAGGLAVGILGALKAAGGLWFGWSGETGNEDQPLKKVKKGNITWASFNLSEQDLDEYYNKFSNAVLWPAFHYRLDLVQFQRPAWDGYLRVNALLADKLLPLLQDDDIIWIHDYHLLPFAHELRKRGVNNRIGFFLHIPFPTPEIFNALPTYDTLLEQLCEYDLLGFQTENDRLAFLDCLSNLTRVTTRSAKSHTACGKAFRTEVYPIGIEPKEIAKQAAGPLPPKLAQLKAELKNVQNIFSVERLDYSKGLPERFLAYEALLEKYPQHHGKIRYTQIAPTSRGDVQAYQDIRHQLENEAGRINGKYGQLGWTPLYYLNQHFDRKLLMKIFRYSDVGLVTPLRDGMNLVAKEYVAAQDPANPGVLVLSQFAGAANELTSALIVNPYDRDEVAAALDRALTMSLAERISRHAEMLDVIVKNDINHWQECFISDLKQIVPRSAESQQRDKVATFPKLA.

Arginine 10 lines the D-glucose 6-phosphate pocket. 22–23 (GG) lines the UDP-alpha-D-glucose pocket. D-glucose 6-phosphate contacts are provided by tyrosine 77 and aspartate 131. Residues arginine 263 and lysine 268 each coordinate UDP-alpha-D-glucose. Position 301 (arginine 301) interacts with D-glucose 6-phosphate. UDP-alpha-D-glucose-binding positions include phenylalanine 340 and 366–370 (LVAKE).

This sequence belongs to the glycosyltransferase 20 family. Homotetramer.

The catalysed reaction is D-glucose 6-phosphate + UDP-alpha-D-glucose = alpha,alpha-trehalose 6-phosphate + UDP + H(+). The protein operates within glycan biosynthesis; trehalose biosynthesis. Functionally, probably involved in the osmoprotection via the biosynthesis of trehalose. Catalyzes the transfer of glucose from UDP-alpha-D-glucose (UDP-Glc) to D-glucose 6-phosphate (Glc-6-P) to form trehalose-6-phosphate. Acts with retention of the anomeric configuration of the UDP-sugar donor. The chain is Trehalose-6-phosphate synthase from Escherichia coli O1:K1 / APEC.